A 37-amino-acid polypeptide reads, in one-letter code: Cytochrome b6-f complex subunit 5 (37 aa).

Residues 5-25 (LLSGIVLGLVPVTIAGLFVTA) form a helical membrane-spanning segment.

It belongs to the PetG family. The 4 large subunits of the cytochrome b6-f complex are cytochrome b6, subunit IV (17 kDa polypeptide, PetD), cytochrome f and the Rieske protein, while the 4 small subunits are PetG, PetL, PetM and PetN. The complex functions as a dimer.

It localises to the plastid. It is found in the chloroplast thylakoid membrane. Functionally, component of the cytochrome b6-f complex, which mediates electron transfer between photosystem II (PSII) and photosystem I (PSI), cyclic electron flow around PSI, and state transitions. PetG is required for either the stability or assembly of the cytochrome b6-f complex. The chain is Cytochrome b6-f complex subunit 5 from Chlamydomonas moewusii (Chlamydomonas eugametos).